A 520-amino-acid polypeptide reads, in one-letter code: GMP synthase [glutamine-hydrolyzing] (520 aa).

The 194-residue stretch at 9–202 (SVLIIDFGSQ…VHNIAGITGD (194 aa)) folds into the Glutamine amidotransferase type-1 domain. Cysteine 86 (nucleophile) is an active-site residue. Active-site residues include histidine 176 and glutamate 178. Positions 203–395 (WSMSAYRAKA…LGLPDSFIGR (193 aa)) constitute a GMPS ATP-PPase domain. 230–236 (SGGVDSS) lines the ATP pocket.

In terms of assembly, homodimer.

The catalysed reaction is XMP + L-glutamine + ATP + H2O = GMP + L-glutamate + AMP + diphosphate + 2 H(+). It functions in the pathway purine metabolism; GMP biosynthesis; GMP from XMP (L-Gln route): step 1/1. Functionally, catalyzes the synthesis of GMP from XMP. This is GMP synthase [glutamine-hydrolyzing] from Allorhizobium ampelinum (strain ATCC BAA-846 / DSM 112012 / S4) (Agrobacterium vitis (strain S4)).